Here is a 226-residue protein sequence, read N- to C-terminus: ATP-dependent dethiobiotin synthetase BioD (226 aa).

An ATP-binding site is contributed by 14 to 19 (GIGKTF). Mg(2+) is bound at residue Thr18. Lys39 is a catalytic residue. Ser43 is a substrate binding site. ATP contacts are provided by residues Asp56, 117-120 (EGVG), 177-178 (NT), 206-208 (PHI), and Asn213. Asp56 and Glu117 together coordinate Mg(2+).

Belongs to the dethiobiotin synthetase family. Homodimer. The cofactor is Mg(2+).

It localises to the cytoplasm. It catalyses the reaction (7R,8S)-7,8-diammoniononanoate + CO2 + ATP = (4R,5S)-dethiobiotin + ADP + phosphate + 3 H(+). The protein operates within cofactor biosynthesis; biotin biosynthesis; biotin from 7,8-diaminononanoate: step 1/2. Catalyzes a mechanistically unusual reaction, the ATP-dependent insertion of CO2 between the N7 and N8 nitrogen atoms of 7,8-diaminopelargonic acid (DAPA, also called 7,8-diammoniononanoate) to form a ureido ring. The polypeptide is ATP-dependent dethiobiotin synthetase BioD (Xylella fastidiosa (strain 9a5c)).